We begin with the raw amino-acid sequence, 214 residues long: Adenylate kinase (214 aa).

Residue 10 to 15 (GAGKGT) participates in ATP binding. The NMP stretch occupies residues 30–59 (STGDMLRAAVKAGTPLGLEAKKVMDAGQLV). Residues T31, R36, 57–59 (QLV), 85–88 (GFPR), and Q92 contribute to the AMP site. Residues 122-159 (GRRVHPGSGRVYHVVFNPPKVEGKDDVTGEDLAIRPDD) are LID. Residues R123 and 132–133 (VY) each bind ATP. 2 residues coordinate AMP: R156 and R167. Position 200 (Q200) interacts with ATP.

Belongs to the adenylate kinase family. Monomer.

It is found in the cytoplasm. The catalysed reaction is AMP + ATP = 2 ADP. It participates in purine metabolism; AMP biosynthesis via salvage pathway; AMP from ADP: step 1/1. Its function is as follows. Catalyzes the reversible transfer of the terminal phosphate group between ATP and AMP. Plays an important role in cellular energy homeostasis and in adenine nucleotide metabolism. This chain is Adenylate kinase, found in Shewanella oneidensis (strain ATCC 700550 / JCM 31522 / CIP 106686 / LMG 19005 / NCIMB 14063 / MR-1).